Consider the following 454-residue polypeptide: GTPase Der (454 aa).

2 consecutive EngA-type G domains span residues 4–167 (AIVA…SEDK) and 188–363 (LELA…ASWQ). GTP is bound by residues 10 to 17 (GKPNVGKS), 56 to 60 (DTPGL), 121 to 124 (NKTE), 194 to 201 (GRPNCGKS), 241 to 245 (DTAGV), and 306 to 309 (NKWD). Positions 364–450 (KRVTTGTLNQ…PVRLSFVKGK (87 aa)) constitute a KH-like domain.

It belongs to the TRAFAC class TrmE-Era-EngA-EngB-Septin-like GTPase superfamily. EngA (Der) GTPase family. As to quaternary structure, associates with the 50S ribosomal subunit.

In terms of biological role, GTPase that plays an essential role in the late steps of ribosome biogenesis. In Orientia tsutsugamushi (strain Ikeda) (Rickettsia tsutsugamushi), this protein is GTPase Der.